The primary structure comprises 872 residues: Potassium voltage-gated channel subfamily KQT member 3 (872 aa).

The interval 1-43 (MGLKARRAAGAAGGGGDGGGGGGGAANPAGGDAAAAGDEERKV) is disordered. Residues 1–120 (MGLKARRAAG…IYDALERPRG (120 aa)) lie on the Cytoplasmic side of the membrane. Positions 11–25 (AAGGGGDGGGGGGGA) are enriched in gly residues. Residues 26 to 36 (ANPAGGDAAAA) show a composition bias toward low complexity. The residue at position 81 (T81) is a Phosphothreonine. The chain crosses the membrane as a helical span at residues 121–143 (WALLYHALVFLIVLGCLILAVLT). Residues 144 to 153 (TFKEYETVSG) are Extracellular-facing. The chain crosses the membrane as a helical span at residues 154–175 (DWLLLLETFAIFIFGAEFALRI). Residues 176-193 (WAAGCCCRYKGWRGRLKF) are Cytoplasmic-facing. Residues 194–213 (ARKPLCMLDIFVLIASVPVV) traverse the membrane as a helical segment. At 214–225 (AVGNQGNVLATS) the chain is on the extracellular side. The helical; Voltage-sensor transmembrane segment at 226 to 244 (LRSLRFLQILRMLRMDRRG) threads the bilayer. Residue R243 participates in a 1,2-diacyl-sn-glycero-3-phospho-(1D-myo-inositol-4,5-bisphosphate) binding. Residues 245–256 (GTWKLLGSAICA) are Cytoplasmic-facing. T246 is subject to Phosphothreonine. The helical transmembrane segment at 257–282 (HSKELITAWYIGFLTLILSSFLVYLV) threads the bilayer. An a 1,2-diacyl-sn-glycero-3-phospho-(1D-myo-inositol-4,5-bisphosphate)-binding site is contributed by K259. Over 283 to 302 (EKDVPEVDAQGEEMKEEFET) the chain is Extracellular. An intramembrane region (pore-forming) is located at residues 303–315 (YADALWWGLITLA). The short motif at 316–321 (TIGYGD) is the Selectivity filter element. Topologically, residues 316–326 (TIGYGDKTPKT) are extracellular. A helical membrane pass occupies residues 327 to 353 (WEGRLIAATFSLIGVSFFALPAGILGS). The Cytoplasmic portion of the chain corresponds to 354-872 (GLALKVQEQH…SVWTPSNKPI (519 aa)). The mediates interaction with calmodulin stretch occupies residues 356-537 (ALKVQEQHRQ…RLYKKKFKET (182 aa)). Position 366 (K366) interacts with a 1,2-diacyl-sn-glycero-3-phospho-(1D-myo-inositol-4,5-bisphosphate). 2 disordered regions span residues 575–611 (GPPS…PSTS) and 764–872 (ADLQ…NKPI). Polar residues-rich tracts occupy residues 587 to 600 (KGSA…QSPR) and 843 to 872 (DPFT…NKPI).

This sequence belongs to the potassium channel family. KQT (TC 1.A.1.15) subfamily. Kv7.3/KCNQ3 sub-subfamily. Heterotetramer with KCNQ2; forms heterotetrameric native M-channel responsible for the M-current. Interacts with calmodulin; the interaction is calcium-independent, constitutive and participates in the proper assembly of a functional M-channel. Heteromultimer with KCNQ5. May associate with KCNE2. Interacts with IQCJ-SCHIP1. Interacts (via the pore module) with SLC5A3/SMIT1; forms a coregulatory complex that alters ion selectivity, voltage dependence and gating kinetics of the channel. Post-translationally, KCNQ2/KCNQ3 are ubiquitinated by NEDD4L. Ubiquitination leads to protein degradation. Degradation induced by NEDD4L is inhibited by USP36. As to expression, predominantly expressed in brain.

The protein resides in the cell membrane. The enzyme catalyses K(+)(in) = K(+)(out). It catalyses the reaction Rb(+)(in) = Rb(+)(out). The catalysed reaction is Cs(+)(in) = Cs(+)(out). It carries out the reaction Na(+)(in) = Na(+)(out). Phosphatidylinositol-4,5-bisphosphate (PIP2) potentiates the activation of KCNQ channels by enhancing the electro-mechanical coupling of the voltage-sensing domain (VSD) and the pore-forming domain (PD). In the closed state of the channel, PIP2 is anchored at the S2-S3 loop; upon channel activation, PIP2 interacts with the S4-S5 linker and is involved in channel gating. Calcium suppresses KCNQ2-KCNQ3 channel currents, with calcium-bound calmodulin inducing a change in channel configuration which leads to the reduction of channel affinity for PIP2 and subsequent current suppression. M-channel is activated by the anticonvulsant retigabine. In terms of biological role, pore-forming subunit of the voltage-gated potassium (Kv) M-channel which is responsible for the M-current, a key controller of neuronal excitability. M-channel is composed of pore-forming subunits KCNQ2 and KCNQ3 assembled as heterotetramers. The native M-current has a slowly activating and deactivating potassium conductance which plays a critical role in determining the subthreshold electrical excitability of neurons as well as the responsiveness to synaptic inputs. M-channel is selectively permeable in vitro to other cations besides potassium, in decreasing order of affinity K(+) &gt; Rb(+) &gt; Cs(+) &gt; Na(+). M-channel association with SLC5A3/SMIT1 alters channel ion selectivity, increasing Na(+) and Cs(+) permeation relative to K(+). Suppressed by activation of M1 muscarinic acetylcholine receptors. KCNQ3 also associates with KCNQ5 to form a functional channel in vitro and may also contribute to the M-current in brain. This is Potassium voltage-gated channel subfamily KQT member 3 from Homo sapiens (Human).